A 345-amino-acid polypeptide reads, in one-letter code: L-threonine 3-dehydrogenase (345 aa).

Position 42 (cysteine 42) interacts with Zn(2+). Active-site charge relay system residues include threonine 44 and histidine 47. Histidine 67, glutamate 68, cysteine 97, cysteine 100, cysteine 103, and cysteine 111 together coordinate Zn(2+). NAD(+)-binding positions include isoleucine 179, aspartate 199, arginine 204, 266–268, and 290–291; these read LGI and IY.

It belongs to the zinc-containing alcohol dehydrogenase family. Homotetramer. Zn(2+) serves as cofactor.

The protein localises to the cytoplasm. It carries out the reaction L-threonine + NAD(+) = (2S)-2-amino-3-oxobutanoate + NADH + H(+). It functions in the pathway amino-acid degradation; L-threonine degradation via oxydo-reductase pathway; glycine from L-threonine: step 1/2. Its function is as follows. Catalyzes the NAD(+)-dependent oxidation of L-threonine to 2-amino-3-ketobutyrate. The sequence is that of L-threonine 3-dehydrogenase from Rhizobium etli (strain ATCC 51251 / DSM 11541 / JCM 21823 / NBRC 15573 / CFN 42).